The sequence spans 145 residues: Large ribosomal subunit protein uL11 (145 aa).

The protein belongs to the universal ribosomal protein uL11 family. As to quaternary structure, part of the ribosomal stalk of the 50S ribosomal subunit. Interacts with L10 and the large rRNA to form the base of the stalk. L10 forms an elongated spine to which L12 dimers bind in a sequential fashion forming a multimeric L10(L12)X complex. In terms of processing, one or more lysine residues are methylated.

Forms part of the ribosomal stalk which helps the ribosome interact with GTP-bound translation factors. The protein is Large ribosomal subunit protein uL11 of Rickettsia massiliae (strain Mtu5).